Reading from the N-terminus, the 483-residue chain is Replication factor C large subunit (483 aa).

43-50 (GKPGIGKT) provides a ligand contact to ATP. Residues 417-442 (ELKKKKKEEDAKGKKARGSKKEKEPI) show a composition bias toward basic and acidic residues. A disordered region spans residues 417-483 (ELKKKKKEED…KSSQSTLFSF (67 aa)). The segment covering 448–457 (SIDSFSSQEP) has biased composition (polar residues).

Belongs to the activator 1 small subunits family. RfcL subfamily. As to quaternary structure, heteromultimer composed of small subunits (RfcS) and large subunits (RfcL).

In terms of biological role, part of the RFC clamp loader complex which loads the PCNA sliding clamp onto DNA. The chain is Replication factor C large subunit from Methanospirillum hungatei JF-1 (strain ATCC 27890 / DSM 864 / NBRC 100397 / JF-1).